The sequence spans 448 residues: Glutamyl-tRNA reductase 2 (448 aa).

Substrate-binding positions include 50–53 (TCER), S109, 114–116 (ESD), and Q120. C51 serves as the catalytic Nucleophile. Residue 190 to 195 (GTGQVA) coordinates NADP(+). A disordered region spans residues 423–448 (DQAVPAYSPQPIGNTSNAAASATPRR). The span at 433 to 442 (PIGNTSNAAA) shows a compositional bias: polar residues.

It belongs to the glutamyl-tRNA reductase family. As to quaternary structure, homodimer.

It carries out the reaction (S)-4-amino-5-oxopentanoate + tRNA(Glu) + NADP(+) = L-glutamyl-tRNA(Glu) + NADPH + H(+). The protein operates within porphyrin-containing compound metabolism; protoporphyrin-IX biosynthesis; 5-aminolevulinate from L-glutamyl-tRNA(Glu): step 1/2. Its function is as follows. Catalyzes the NADPH-dependent reduction of glutamyl-tRNA(Glu) to glutamate 1-semialdehyde (GSA). The polypeptide is Glutamyl-tRNA reductase 2 (Nocardioides sp. (strain ATCC BAA-499 / JS614)).